Reading from the N-terminus, the 60-residue chain is Large ribosomal subunit protein bL32 (60 aa).

A disordered region spans residues 1 to 44 (MAVQQNKKSRSARDMRRSHDALEASTLSVEKTTGEVHLRHHVSP). Over residues 11 to 22 (SARDMRRSHDAL) the composition is skewed to basic and acidic residues.

Belongs to the bacterial ribosomal protein bL32 family.

This chain is Large ribosomal subunit protein bL32, found in Pseudomonas fluorescens (strain SBW25).